The primary structure comprises 356 residues: Guanine nucleotide-binding protein alpha-2 subunit (356 aa).

The segment at 1 to 25 (MGLCQSEEEKVGSQKSRAIDKEIKQ) is disordered. A lipid anchor (N-myristoyl glycine) is attached at Gly2. Cys4 carries the S-palmitoyl cysteine lipid modification. A compositionally biased stretch (basic and acidic residues) spans 7 to 25 (EEEKVGSQKSRAIDKEIKQ). The region spanning 14–338 (QKSRAIDKEI…TDTNQVQKIL (325 aa)) is the G-alpha domain. Residues 17-30 (RAIDKEIKQNQSND) form a G1 motif region. The GTP site is built by Gln25, Gln27, Ser28, Asn29, Asp30, Val135, Glu160, Ala166, Val188, Glu254, Ser255, Cys257, and Phe310. A Mg(2+)-binding site is contributed by Asn29. The tract at residues 158–166 (FFENLDRIA) is G2 motif. Ala166 provides a ligand contact to Mg(2+). Residues 181 to 190 (RTKTTGIVEV) are G3 motif. The segment at 250 to 257 (MRLFESIC) is G4 motif. A G5 motif region spans residues 308–313 (QKFEAL).

The protein belongs to the G-alpha family. G(q) subfamily. As to quaternary structure, g proteins are composed of 3 units; alpha, beta and gamma. The alpha chain contains the guanine nucleotide binding site. The cofactor is Mg(2+).

Guanine nucleotide-binding proteins (G proteins) are involved as modulators or transducers in various transmembrane signaling systems. Involved in behavioral responses to P.aeruginosa by controlling the expression of daf-7, a member of the TGF-beta family, in ASJ sensory neurons. This chain is Guanine nucleotide-binding protein alpha-2 subunit (gpa-2), found in Caenorhabditis briggsae.